The primary structure comprises 149 residues: HTH-type transcriptional regulator LrpB (149 aa).

In terms of domain architecture, HTH asnC-type spans 3–64; that stretch reads IDSIDFQILQ…VVDELKMGFS (62 aa). Positions 22-41 form a DNA-binding region, H-T-H motif; that stretch reads WKEIGEKIHMTGQAVGNRIK.

In terms of biological role, negative regulation of glyA transcription and kinB-dependent sporulation. The protein is HTH-type transcriptional regulator LrpB (lrpB) of Bacillus subtilis (strain 168).